The primary structure comprises 271 residues: MRWPWSGDDHEQNKSSRLWATSPKSSDWPSTLVEPRTLIATLALTVSTVAGVRLYKTYLRRIPTVNHIKPNYFRRKSLFGQVTSVGDADNFRLYHTPGGRIAGWGLLPWKRIPTKREDLTKQTLHIRIAGVDAPELAHWGREAQPFSKEAHDWLINLIHNRRVRAYIYRRDQYDRVVAQVYVRRWLFRKDVGLEMLRAGLATVYEAKTGAEFGTVEDKYRAAEQKARDSKVGMWAKPTLRQRLGGAPTQPPESPREYKNRHNAAEKLKKPG.

Positions 1–27 (MRWPWSGDDHEQNKSSRLWATSPKSSD) are disordered. Polar residues predominate over residues 15–27 (SSRLWATSPKSSD). A helical transmembrane segment spans residues 38–55 (LIATLALTVSTVAGVRLY). The region spanning 76–236 (KSLFGQVTSV…RDSKVGMWAK (161 aa)) is the TNase-like domain. Residue Arg-127 is part of the active site. Asp-132 is a binding site for Ca(2+). Active-site residues include Glu-135 and Arg-175. The tract at residues 226 to 271 (ARDSKVGMWAKPTLRQRLGGAPTQPPESPREYKNRHNAAEKLKKPG) is disordered. Residues 253–271 (SPREYKNRHNAAEKLKKPG) show a composition bias toward basic and acidic residues.

Belongs to the LCL3 family.

The protein localises to the mitochondrion. Its subcellular location is the membrane. This chain is Probable endonuclease lcl3 (lcl3), found in Pyrenophora tritici-repentis (strain Pt-1C-BFP) (Wheat tan spot fungus).